We begin with the raw amino-acid sequence, 3003 residues long: MAX gene-associated protein (3003 aa).

Glycyl lysine isopeptide (Lys-Gly) (interchain with G-Cter in SUMO2) cross-links involve residues lysine 4 and lysine 178. Positions 84-260 (MWNEFHNRST…YNPFAKGFRD (177 aa)) form a DNA-binding region, T-box. Residues 259 to 277 (RDDGLSSKPQREGKQRNSS) are compositionally biased toward basic and acidic residues. A disordered region spans residues 259 to 290 (RDDGLSSKPQREGKQRNSSDQEGNSVSSSPAH). A compositionally biased stretch (polar residues) spans 278–288 (DQEGNSVSSSP). Glycyl lysine isopeptide (Lys-Gly) (interchain with G-Cter in SUMO2) cross-links involve residues lysine 323, lysine 329, lysine 348, lysine 431, lysine 458, lysine 463, and lysine 480. Serine 531 carries the phosphoserine modification. The interval 553–647 (ILDNSSTERI…NIPVGPGSTF (95 aa)) is disordered. A Glycyl lysine isopeptide (Lys-Gly) (interchain with G-Cter in SUMO2) cross-link involves residue lysine 567. Polar residues predominate over residues 595-607 (KTVTASHSASPNT). Serine 604 is subject to Phosphoserine. Glycyl lysine isopeptide (Lys-Gly) (interchain with G-Cter in SUMO2) cross-links involve residues lysine 610, lysine 651, lysine 782, lysine 788, lysine 814, and lysine 823. A compositionally biased stretch (basic residues) spans 610–621 (KRGRPRKLRLSK). Residue serine 848 is modified to Phosphoserine. Positions 871–913 (KQSTISPSTSHSVKPQSVTTASRKTKAQNKQTTLSGRTKSSYK) are enriched in polar residues. Disordered regions lie at residues 871–946 (KQST…TSDN) and 967–987 (LRQAQQQHLQQQGTRPPGLSK). Serine 921 is subject to Phosphoserine. A Glycyl lysine isopeptide (Lys-Gly) (interchain with G-Cter in SUMO2) cross-link involves residue lysine 925. The span at 937-946 (KNSLSSTSDN) shows a compositional bias: polar residues. The span at 969–978 (QAQQQHLQQQ) shows a compositional bias: low complexity. Residues lysine 987 and lysine 1088 each participate in a glycyl lysine isopeptide (Lys-Gly) (interchain with G-Cter in SUMO2) cross-link. The disordered stretch occupies residues 1111-1130 (LGEEGREGGGVREDEEQLKE). Residues 1113–1122 (EEGREGGGVR) are compositionally biased toward basic and acidic residues. Residues lysine 1136, lysine 1158, lysine 1194, and lysine 1202 each participate in a glycyl lysine isopeptide (Lys-Gly) (interchain with G-Cter in SUMO2) cross-link. Disordered regions lie at residues 1186–1215 (QPDLSSTTKGKLTPGIKPARTYTPKPNPVI), 1246–1277 (QRQLSPPLSPSSSFQQQSSCYSSPENRVTKEL), 1297–1323 (SQEKSWKSSCNEGESSSTSYVHQRSPG), and 1376–1424 (RGEK…DISP). Composition is skewed to low complexity over residues 1248–1269 (QLSPPLSPSSSFQQQSSCYSSP) and 1303–1315 (KSSCNEGESSSTS). Phosphoserine is present on residues serine 1423 and serine 1450. Glycyl lysine isopeptide (Lys-Gly) (interchain with G-Cter in SUMO2) cross-links involve residues lysine 1454 and lysine 1495. 6 disordered regions span residues 1476–1508 (AKVAASRKPRTLLPSTSNSKMASSGPATNRSGK), 1722–1746 (PPVSQRPENAPQIPVTTPQISSNNV), 1856–1885 (ISPPETQNLASKTGSESKITPSTGGQPVGT), 1920–1954 (IKKESQSTDQKDETNSIKREEETKKALPSKDKALD), 1964–1983 (SGIIASENTSNNSLDDGGDL), and 1988–2038 (TLRE…AGSK). 3 stretches are compositionally biased toward polar residues: residues 1488–1507 (LPSTSNSKMASSGPATNRSG), 1735–1746 (PVTTPQISSNNV), and 1859–1880 (PETQNLASKTGSESKITPSTGG). Glycyl lysine isopeptide (Lys-Gly) (interchain with G-Cter in SUMO2) cross-links involve residues lysine 1937 and lysine 1944. A compositionally biased stretch (polar residues) spans 1964–1976 (SGIIASENTSNNS). Residues lysine 2060 and lysine 2084 each participate in a glycyl lysine isopeptide (Lys-Gly) (interchain with G-Cter in SUMO2) cross-link. The segment at 2087 to 2110 (LSGNQVKEQQSNSQAEAKKDCEDS) is disordered. Positions 2088–2101 (SGNQVKEQQSNSQA) are enriched in polar residues. Glycyl lysine isopeptide (Lys-Gly) (interchain with G-Cter in SUMO2) cross-links involve residues lysine 2104, lysine 2152, and lysine 2179. Arginine 2206 bears the Omega-N-methylarginine mark. A disordered region spans residues 2207 to 2255 (GSRHFQGHLLLPREQMKPKQQTKDGRSSAADFTVLDLEDEDEEDEKTDD). Residues 2220–2232 (EQMKPKQQTKDGR) show a composition bias toward basic and acidic residues. A Glycyl lysine isopeptide (Lys-Gly) (interchain with G-Cter in SUMO2) cross-link involves residue lysine 2225. A compositionally biased stretch (acidic residues) spans 2242–2255 (DLEDEDEEDEKTDD). Glycyl lysine isopeptide (Lys-Gly) (interchain with G-Cter in SUMO2) cross-links involve residues lysine 2317, lysine 2352, lysine 2396, and lysine 2471. The bHLH domain occupies 2362 to 2413 (YYRRTHTANERRRRGEMRDLFEKLKITLGLLHSSKVSKSLILNRAFSEIQGL). Position 2480 is a phosphoserine (serine 2480). Residues 2515 to 2534 (KRDQATENASPSDTPHSSAN) are disordered. The segment covering 2520-2534 (TENASPSDTPHSSAN) has biased composition (polar residues). Glycyl lysine isopeptide (Lys-Gly) (interchain with G-Cter in SUMO2) cross-links involve residues lysine 2568 and lysine 2618. Over residues 2629 to 2651 (SEASSLKDTERISSRGNHRDSRK) the composition is skewed to basic and acidic residues. The disordered stretch occupies residues 2629–2654 (SEASSLKDTERISSRGNHRDSRKALG). Residue lysine 2724 forms a Glycyl lysine isopeptide (Lys-Gly) (interchain with G-Cter in SUMO2) linkage. A phosphoserine mark is found at serine 2849 and serine 2860. Positions 2877–2917 (LVSHRKSSDGGQSTSGLPAEPESVSSPPILHMKTGPENSNT) are disordered. Lysine 2979 participates in a covalent cross-link: Glycyl lysine isopeptide (Lys-Gly) (interchain with G-Cter in SUMO2).

As to quaternary structure, component of some MLL1/MLL complex, at least composed of the core components KMT2A/MLL1, ASH2L, HCFC1/HCF1, WDR5 and RBBP5, as well as the facultative components BACC1, CHD8, E2F6, HSP70, INO80C, KANSL1, LAS1L, MAX, MCRS1, MGA, MYST1/MOF, PELP1, PHF20, PRP31, RING2, RUVB1/TIP49A, RUVB2/TIP49B, SENP3, TAF1, TAF4, TAF6, TAF7, TAF9 and TEX10. Interacts with ZMYND11. Interacts with MAX. Requires heterodimerization with MAX for E-box binding. Highly expressed in germ cells and granulosa cells.

It is found in the nucleus. In terms of biological role, functions as a dual-specificity transcription factor, regulating the expression of both MAX-network and T-box family target genes. Functions as a repressor or an activator. Binds to 5'-AATTTCACACCTAGGTGTGAAATT-3' core sequence and seems to regulate MYC-MAX target genes. Suppresses transcriptional activation by MYC and inhibits MYC-dependent cell transformation. Function activated by heterodimerization with MAX. This heterodimerization serves the dual function of both generating an E-box-binding heterodimer and simultaneously blocking interaction of a corepressor. This is MAX gene-associated protein from Mus musculus (Mouse).